Here is a 214-residue protein sequence, read N- to C-terminus: Phosphatidylserine decarboxylase proenzyme (214 aa).

The Schiff-base intermediate with substrate; via pyruvic acid role is filled by serine 182. Serine 182 carries the post-translational modification Pyruvic acid (Ser); by autocatalysis.

It belongs to the phosphatidylserine decarboxylase family. PSD-A subfamily. In terms of assembly, heterodimer of a large membrane-associated beta subunit and a small pyruvoyl-containing alpha subunit. The cofactor is pyruvate. In terms of processing, is synthesized initially as an inactive proenzyme. Formation of the active enzyme involves a self-maturation process in which the active site pyruvoyl group is generated from an internal serine residue via an autocatalytic post-translational modification. Two non-identical subunits are generated from the proenzyme in this reaction, and the pyruvate is formed at the N-terminus of the alpha chain, which is derived from the carboxyl end of the proenzyme. The post-translation cleavage follows an unusual pathway, termed non-hydrolytic serinolysis, in which the side chain hydroxyl group of the serine supplies its oxygen atom to form the C-terminus of the beta chain, while the remainder of the serine residue undergoes an oxidative deamination to produce ammonia and the pyruvoyl prosthetic group on the alpha chain.

The protein resides in the cell membrane. The enzyme catalyses a 1,2-diacyl-sn-glycero-3-phospho-L-serine + H(+) = a 1,2-diacyl-sn-glycero-3-phosphoethanolamine + CO2. The protein operates within phospholipid metabolism; phosphatidylethanolamine biosynthesis; phosphatidylethanolamine from CDP-diacylglycerol: step 2/2. Functionally, catalyzes the formation of phosphatidylethanolamine (PtdEtn) from phosphatidylserine (PtdSer). This is Phosphatidylserine decarboxylase proenzyme from Burkholderia vietnamiensis (strain G4 / LMG 22486) (Burkholderia cepacia (strain R1808)).